The chain runs to 717 residues: MQNSEGGADSPASVALRPAAQPMPASPQRVLVQAAGSTPKGTPMQTLTLPRVQPVPPQVQHVYPAQVQYVEGGDAVYANGAIRAAYAYNPDPQLYAPSSAASYFETPGGTQVTVAASSPPAVPSHGMVGITMDVSGTPIVSGAGAYLIHGGMDGTRHSLAHTARSSPATLEMAIETLQKSEGLAPHKGGLLNSHLQWLLDNYETAEGVSLPRSSLYNHYLRHCQEHKLEPVNAASFGKLIRSVFMGLRTRRLGTRGNSKYHYYGIRLKPDSPLNRLQEDTQYMAMRQQPTHQKPRYRPAQKSDSLGDGSAHSNMHGMPDQAMATQGQHHQQYIDVSHVFPEFPAPDLGSTLLQESVTLHDVKALQLVYRRHCEATLDVVMNLQFQYIEKLWLSFWNCKATSSDSCASLPASDEDPEVTLLPKEKLISLCKCEPILQWMRSCDHILYQTLVETLIPDVLRPVPSSLTQAIRNFAKSLEGWLINAMSGFPQQVIQTKVGVVSAFAQTLRRYTSLNHLAQAARAVLQNTSQINQMLSDLNRVDFANVQEQASWVCQCEESLVQRLEHDFKVTLQQQSSLDQWASWLDNVVTQVLKQHSGSPSFPKAARQFLLKWSFYSSMVIRDLTLRSAASFGSFHLIRLLYDEYMFYLVEHRVAQATGETPIAVMGEFNDLASLSLTLLDKEDIGDGHSSEADVDGRSLGEPLVKRERSDPSHPLQGI.

Positions 1-28 (MQNSEGGADSPASVALRPAAQPMPASPQ) are disordered. A Phosphoserine modification is found at serine 26. The RFX-type winged-helix DNA-binding region spans 194–269 (HLQWLLDNYE…YHYYGIRLKP (76 aa)). The tract at residues 286-318 (RQQPTHQKPRYRPAQKSDSLGDGSAHSNMHGMP) is disordered. A Phosphoserine modification is found at serine 411. The span at 685 to 710 (DGHSSEADVDGRSLGEPLVKRERSDP) shows a compositional bias: basic and acidic residues. Residues 685 to 717 (DGHSSEADVDGRSLGEPLVKRERSDPSHPLQGI) form a disordered region.

Belongs to the RFX family. In terms of assembly, homodimer; probably only forms homodimers in testis. Heterodimer; heterodimerizes with RFX1 and RFX3.

It is found in the nucleus. Its subcellular location is the cytoplasm. Transcription factor that acts as a key regulator of spermatogenesis. Acts by regulating expression of genes required for the haploid phase during spermiogenesis, such as genes required for cilium assembly and function. Recognizes and binds the X-box, a regulatory motif with DNA sequence 5'-GTNRCC(0-3N)RGYAAC-3' present on promoters. Probably activates transcription of the testis-specific histone gene H1-6. The polypeptide is DNA-binding protein RFX2 (Rfx2) (Mus musculus (Mouse)).